The primary structure comprises 316 residues: 33 kDa chaperonin (316 aa).

Intrachain disulfides connect C239/C241 and C272/C275.

It belongs to the HSP33 family. Post-translationally, under oxidizing conditions two disulfide bonds are formed involving the reactive cysteines. Under reducing conditions zinc is bound to the reactive cysteines and the protein is inactive.

The protein localises to the cytoplasm. Its function is as follows. Redox regulated molecular chaperone. Protects both thermally unfolding and oxidatively damaged proteins from irreversible aggregation. Plays an important role in the bacterial defense system toward oxidative stress. The polypeptide is 33 kDa chaperonin (Clostridium perfringens (strain SM101 / Type A)).